A 202-amino-acid polypeptide reads, in one-letter code: 3-isopropylmalate dehydratase small subunit (202 aa).

This sequence belongs to the LeuD family. LeuD type 1 subfamily. As to quaternary structure, heterodimer of LeuC and LeuD.

It carries out the reaction (2R,3S)-3-isopropylmalate = (2S)-2-isopropylmalate. Its pathway is amino-acid biosynthesis; L-leucine biosynthesis; L-leucine from 3-methyl-2-oxobutanoate: step 2/4. Catalyzes the isomerization between 2-isopropylmalate and 3-isopropylmalate, via the formation of 2-isopropylmaleate. This is 3-isopropylmalate dehydratase small subunit from Buchnera aphidicola subsp. Pemphigus spyrothecae.